Consider the following 301-residue polypeptide: MTTLDDKLLGEKLQYYYSTSEDEDSDHEDKDRGRGAPAISSTPAEAELAGEGISINTGPKGVINDWRRFKQLETEQREEQCREMERLIKKLSMSCRSHLDEEEEQQKQKDLQEKISGKMTLKEFGTKDKNLDDEEFLQQYRKQRMEEMRQQFHKGPQFKQVFEIPSGEGFLDMIDKEQKSTLIMVHIYEDGVPGTEAMNGCMICLATEYPAVKFCRVRSSVIGASSRFTRNALPALLIYKAGELIGNFVRVTDQLGEDFFAVDLEAFLQEFGLLPEKEVLVLTSVRNSATCHSEDSDLEID.

T2 carries the post-translational modification N-acetylthreonine. The interval 17–60 (YSTSEDEDSDHEDKDRGRGAPAISSTPAEAELAGEGISINTGPK) is disordered. Residues S20, S25, S226, S293, and S296 each carry the phosphoserine modification. Residues 36-299 (APAISSTPAE…TCHSEDSDLE (264 aa)) enclose the Phosducin domain. The thioredoxin fold stretch occupies residues 158–301 (FKQVFEIPSG…HSEDSDLEID (144 aa)).

The protein belongs to the phosducin family. As to quaternary structure, forms a complex with the beta and gamma subunits of the GTP-binding protein, transducin. Interacts with the CCT chaperonin complex.

Its subcellular location is the cell projection. It localises to the cilium. Functions as a co-chaperone for CCT in the assembly of heterotrimeric G protein complexes, facilitates the assembly of both Gbeta-Ggamma and RGS-Gbeta5 heterodimers. Also acts as a positive regulator of hedgehog signaling and regulates ciliary function. The polypeptide is Phosducin-like protein (Pdcl) (Mus musculus (Mouse)).